The following is a 189-amino-acid chain: Crossover junction endodeoxyribonuclease RuvC (189 aa).

Residues D7, E68, and D141 contribute to the active site. Mg(2+) is bound by residues D7, E68, and D141.

It belongs to the RuvC family. As to quaternary structure, homodimer which binds Holliday junction (HJ) DNA. The HJ becomes 2-fold symmetrical on binding to RuvC with unstacked arms; it has a different conformation from HJ DNA in complex with RuvA. In the full resolvosome a probable DNA-RuvA(4)-RuvB(12)-RuvC(2) complex forms which resolves the HJ. It depends on Mg(2+) as a cofactor.

The protein resides in the cytoplasm. The enzyme catalyses Endonucleolytic cleavage at a junction such as a reciprocal single-stranded crossover between two homologous DNA duplexes (Holliday junction).. The RuvA-RuvB-RuvC complex processes Holliday junction (HJ) DNA during genetic recombination and DNA repair. Endonuclease that resolves HJ intermediates. Cleaves cruciform DNA by making single-stranded nicks across the HJ at symmetrical positions within the homologous arms, yielding a 5'-phosphate and a 3'-hydroxyl group; requires a central core of homology in the junction. The consensus cleavage sequence is 5'-(A/T)TT(C/G)-3'. Cleavage occurs on the 3'-side of the TT dinucleotide at the point of strand exchange. HJ branch migration catalyzed by RuvA-RuvB allows RuvC to scan DNA until it finds its consensus sequence, where it cleaves and resolves the cruciform DNA. This chain is Crossover junction endodeoxyribonuclease RuvC, found in Rhodococcus jostii (strain RHA1).